Consider the following 400-residue polypeptide: S-adenosylmethionine synthase (400 aa).

Residue His-17 coordinates ATP. Asp-19 provides a ligand contact to Mg(2+). Glu-45 provides a ligand contact to K(+). The L-methionine site is built by Glu-58 and Gln-101. Positions Gln-101–Gln-111 are flexible loop. Residues Asp-177–Lys-179, Arg-244–Phe-245, Asp-253, Arg-259–Lys-260, Ala-276, and Lys-280 each bind ATP. Residue Asp-253 coordinates L-methionine. Lys-284 contributes to the L-methionine binding site.

This sequence belongs to the AdoMet synthase family. In terms of assembly, homotetramer; dimer of dimers. It depends on Mg(2+) as a cofactor. The cofactor is K(+).

It is found in the cytoplasm. It catalyses the reaction L-methionine + ATP + H2O = S-adenosyl-L-methionine + phosphate + diphosphate. The protein operates within amino-acid biosynthesis; S-adenosyl-L-methionine biosynthesis; S-adenosyl-L-methionine from L-methionine: step 1/1. Catalyzes the formation of S-adenosylmethionine (AdoMet) from methionine and ATP. The overall synthetic reaction is composed of two sequential steps, AdoMet formation and the subsequent tripolyphosphate hydrolysis which occurs prior to release of AdoMet from the enzyme. This chain is S-adenosylmethionine synthase, found in Bacillus subtilis (strain 168).